Consider the following 346-residue polypeptide: GTP 3',8-cyclase (346 aa).

A Radical SAM core domain is found at 10 to 240 (QRSRPLRVLR…VTRIRARWPL (231 aa)). R19 contributes to the GTP binding site. The [4Fe-4S] cluster site is built by C26 and C30. Residue Y32 coordinates S-adenosyl-L-methionine. Position 33 (C33) interacts with [4Fe-4S] cluster. A GTP-binding site is contributed by R65. Residue G69 coordinates S-adenosyl-L-methionine. T104 provides a ligand contact to GTP. S129 contacts S-adenosyl-L-methionine. GTP is bound at residue K177. M211 contacts S-adenosyl-L-methionine. C274 and C277 together coordinate [4Fe-4S] cluster. 279–281 (RLR) contributes to the GTP binding site. C291 is a [4Fe-4S] cluster binding site. The tract at residues 326–346 (SDERQQTTGSMPHAEMAYLGG) is disordered.

It belongs to the radical SAM superfamily. MoaA family. In terms of assembly, monomer and homodimer. It depends on [4Fe-4S] cluster as a cofactor.

It carries out the reaction GTP + AH2 + S-adenosyl-L-methionine = (8S)-3',8-cyclo-7,8-dihydroguanosine 5'-triphosphate + 5'-deoxyadenosine + L-methionine + A + H(+). Its pathway is cofactor biosynthesis; molybdopterin biosynthesis. Its function is as follows. Catalyzes the cyclization of GTP to (8S)-3',8-cyclo-7,8-dihydroguanosine 5'-triphosphate. This is GTP 3',8-cyclase from Parasynechococcus marenigrum (strain WH8102).